We begin with the raw amino-acid sequence, 117 residues long: Appetite-regulating hormone (117 aa).

The first 23 residues, 1–23 (MPSPGTVCSLLLLGMLWLDLAMA), serve as a signal peptide directing secretion. Ser-26 carries O-decanoyl serine; alternate lipidation. The O-hexanoyl serine; alternate moiety is linked to residue Ser-26. The O-octanoyl serine; alternate moiety is linked to residue Ser-26. Residues 29–67 (SPEHQRAQQRKESKKPPAKLQPRALGGWLRPEDGDQAEG) are disordered. Over residues 31–43 (EHQRAQQRKESKK) the composition is skewed to basic and acidic residues. A propeptide spans 52–75 (ALGGWLRPEDGDQAEGAEDELEIQ) (removed in mature form). Residue Leu-98 is modified to Leucine amide. A propeptide spans 99–117 (GKFLQDILWEEAKEAPADK) (removed in mature form).

Belongs to the motilin family. In terms of processing, O-octanoylated by GOAT/MBOAT4. O-octanoylation is essential for ghrelin activity. Amidation of Leu-98 is essential for obestatin activity.

Its subcellular location is the secreted. Functionally, ghrelin is the ligand for growth hormone secretagogue receptor type 1 (GHSR). Induces the release of growth hormone from the pituitary. Has an appetite-stimulating effect, induces adiposity and stimulates gastric acid secretion. Involved in growth regulation. Its function is as follows. Obestatin may be the ligand for GPR39. May have an appetite-reducing effect resulting in decreased food intake. May reduce gastric emptying activity and jejunal motility. In Papio hamadryas (Hamadryas baboon), this protein is Appetite-regulating hormone (GHRL).